The chain runs to 295 residues: Sperm acrosome membrane-associated protein 1 (295 aa).

An N-terminal signal peptide occupies residues M1–G29. The Extracellular portion of the chain corresponds to I30–V220. Positions S39–S71 are disordered. Residues G44–Q68 are compositionally biased toward acidic residues. N-linked (GlcNAc...) asparagine glycosylation occurs at N72. A helical membrane pass occupies residues F221–I241. Topologically, residues V242–E295 are cytoplasmic. A Phosphoserine modification is found at S256. Residues E263–E295 are disordered. Y269 carries the phosphotyrosine modification. 2 positions are modified to phosphoserine: S278 and S291.

In terms of assembly, interacts with CYLC1; the interaction may be relevant for proper acrosome attachment to the nuclear envelope. In terms of processing, N-glycosylated. Detected in spermatozoa (at protein level).

It localises to the cytoplasmic vesicle. Its subcellular location is the secretory vesicle. The protein resides in the acrosome inner membrane. In terms of biological role, plays a role in acrosome expansion and establishment of normal sperm morphology during spermatogenesis. Important for male fertility. The protein is Sperm acrosome membrane-associated protein 1 of Sus scrofa (Pig).